Reading from the N-terminus, the 177-residue chain is Large ribosomal subunit protein uL6 (177 aa).

The protein belongs to the universal ribosomal protein uL6 family. In terms of assembly, part of the 50S ribosomal subunit.

Functionally, this protein binds to the 23S rRNA, and is important in its secondary structure. It is located near the subunit interface in the base of the L7/L12 stalk, and near the tRNA binding site of the peptidyltransferase center. This Beijerinckia indica subsp. indica (strain ATCC 9039 / DSM 1715 / NCIMB 8712) protein is Large ribosomal subunit protein uL6.